We begin with the raw amino-acid sequence, 417 residues long: Serine hydroxymethyltransferase (417 aa).

(6S)-5,6,7,8-tetrahydrofolate contacts are provided by residues leucine 121 and glycine 125–leucine 127. Lysine 230 is modified (N6-(pyridoxal phosphate)lysine). Position 355-357 (serine 355–phenylalanine 357) interacts with (6S)-5,6,7,8-tetrahydrofolate.

It belongs to the SHMT family. As to quaternary structure, homodimer. Pyridoxal 5'-phosphate serves as cofactor.

It localises to the cytoplasm. The enzyme catalyses (6R)-5,10-methylene-5,6,7,8-tetrahydrofolate + glycine + H2O = (6S)-5,6,7,8-tetrahydrofolate + L-serine. It functions in the pathway one-carbon metabolism; tetrahydrofolate interconversion. Its pathway is amino-acid biosynthesis; glycine biosynthesis; glycine from L-serine: step 1/1. Its function is as follows. Catalyzes the reversible interconversion of serine and glycine with tetrahydrofolate (THF) serving as the one-carbon carrier. This reaction serves as the major source of one-carbon groups required for the biosynthesis of purines, thymidylate, methionine, and other important biomolecules. Also exhibits THF-independent aldolase activity toward beta-hydroxyamino acids, producing glycine and aldehydes, via a retro-aldol mechanism. The protein is Serine hydroxymethyltransferase of Legionella pneumophila (strain Corby).